The primary structure comprises 65 residues: Large ribosomal subunit protein bL35 (65 aa).

This sequence belongs to the bacterial ribosomal protein bL35 family.

The sequence is that of Large ribosomal subunit protein bL35 from Aeromonas salmonicida (strain A449).